The primary structure comprises 34 residues: N(4)-(Beta-N-acetylglucosaminyl)-L-asparaginase (34 aa).

Catalysis depends on threonine 18, which acts as the Nucleophile.

Belongs to the Ntn-hydrolase family. In terms of assembly, heterotetramer of two alpha and two beta chains arranged as a dimer of alpha/beta heterodimers. Post-translationally, cleaved into an alpha and beta chain by autocatalysis; this activates the enzyme. The N-terminal residue of the beta subunit is responsible for the nucleophile hydrolase activity. In terms of processing, N-glycosylated.

The protein resides in the lysosome. It catalyses the reaction N(4)-(beta-N-acetyl-D-glucosaminyl)-L-asparagine + H2O = N-acetyl-beta-D-glucosaminylamine + L-aspartate + H(+). In terms of biological role, cleaves the GlcNAc-Asn bond which joins oligosaccharides to the peptide of asparagine-linked glycoproteins. The chain is N(4)-(Beta-N-acetylglucosaminyl)-L-asparaginase (AGA) from Sus scrofa (Pig).